The sequence spans 192 residues: MQSGNLWRALGLCLLLVGAWAQDADEQKPYEVSISGNTVELTCPREFEGEIHWKQNDEQMKGYTGKQLLLENFSEMDNSGYYQCYMTEGNKEAAHTLYLKARVCQNCMEVNLMEVATIIVVDICVTLGLLLLVYYWSKSRKAKASPMTRGAGAGGRPRGQNKGRPPPVPNPDYEPIRKGQRDLYAGLNQRGV.

Positions 1 to 21 (MQSGNLWRALGLCLLLVGAWA) are cleaved as a signal peptide. Topologically, residues 23–114 (DADEQKPYEV…QNCMEVNLME (92 aa)) are extracellular. Residues 26-97 (EQKPYEVSIS…EGNKEAAHTL (72 aa)) form the Ig-like domain. Cys-43 and Cys-84 are disulfide-bonded. Asn-72 is a glycosylation site (N-linked (GlcNAc...) asparagine). A helical membrane pass occupies residues 115–135 (VATIIVVDICVTLGLLLLVYY). Topologically, residues 136-192 (WSKSRKAKASPMTRGAGAGGRPRGQNKGRPPPVPNPDYEPIRKGQRDLYAGLNQRGV) are cytoplasmic. A disordered region spans residues 145–180 (SPMTRGAGAGGRPRGQNKGRPPPVPNPDYEPIRKGQ). The tract at residues 160 to 177 (QNKGRPPPVPNPDYEPIR) is NUMB-binding region. The ITAM domain maps to 163-190 (GRPPPVPNPDYEPIRKGQRDLYAGLNQR). Residues 164–171 (RPPPVPNP) are proline-rich sequence. A phosphotyrosine mark is found at Tyr-173 and Tyr-184.

The TCR-CD3 complex is composed of a CD3D/CD3E and a CD3G/CD3E heterodimers that preferentially associate with TCRalpha and TCRbeta, respectively, to form TCRalpha/CD3E/CD3G and TCRbeta/CD3G/CD3E trimers. In turn, the hexamer interacts with CD3Z homodimer to form the TCR-CD3 complex. Alternatively, TCRalpha and TCRbeta can be replaced by TCRgamma and TCRdelta. Interacts with CD6. Interacts (via Proline-rich sequence) with NCK1; the interaction is ligand dependent but independent of tyrosine kinase activation. In terms of processing, phosphorylated on Tyr residues after T-cell receptor triggering by LCK in association with CD4/CD8.

The protein resides in the cell membrane. Functionally, part of the TCR-CD3 complex present on T-lymphocyte cell surface that plays an essential role in adaptive immune response. When antigen presenting cells (APCs) activate T-cell receptor (TCR), TCR-mediated signals are transmitted across the cell membrane by the CD3 chains CD3D, CD3E, CD3G and CD3Z. All CD3 chains contain immunoreceptor tyrosine-based activation motifs (ITAMs) in their cytoplasmic domain. Upon TCR engagement, these motifs become phosphorylated by Src family protein tyrosine kinases LCK and FYN, resulting in the activation of downstream signaling pathways. In addition of this role of signal transduction in T-cell activation, CD3E plays an essential role in correct T-cell development. Also participates in internalization and cell surface down-regulation of TCR-CD3 complexes via endocytosis sequences present in CD3E cytosolic region. In addition to its role as a TCR coreceptor, it serves as a receptor for ITPRIPL1. Ligand recognition inhibits T-cell activation by promoting interaction with NCK1, which prevents CD3E-ZAP70 interaction and blocks the ERK-NFkB signaling cascade and calcium influx. In Bos taurus (Bovine), this protein is T-cell surface glycoprotein CD3 epsilon chain (CD3E).